Consider the following 351-residue polypeptide: MVDDSAVVRQVLVNVLNDAADIEVIATAADPLLAIEKMRKQWPDVIVLDVEMPRMDGITFLRKIMSERPTPVVICSTLTEKGARVTMDALAAGAVAVVTKPRLGLKQFLTESADELVATVRSAARANVKRLAARVTAAPLEAEVKHTADVILPAQSGRAMAQTTERIVAIGTSTGGTQALEEVLTALPRVCPGIVIVQHMPEKFTAAFAARLNGLCQIAVKEAANNDRVMPGRALIAPGGKHLLLRRSGAQYFVEVLEGPPVNRHRPSVDVLFRSAARAAGSNALGIIMTGMGDDGAAGLLEMRQAGARTVAQDEQTSIVFGMPKEAIKRGGADRILALGAMAREIVTQLQ.

One can recognise a Response regulatory domain in the interval 1–115; the sequence is MVDDSAVVRQ…KQFLTESADE (115 aa). Residue Asp-49 is modified to 4-aspartylphosphate. The 191-residue stretch at 161–351 folds into the CheB-type methylesterase domain; it reads AQTTERIVAI…MAREIVTQLQ (191 aa). Active-site residues include Ser-173, His-199, and Asp-295.

This sequence belongs to the CheB family. In terms of processing, phosphorylated by CheA. Phosphorylation of the N-terminal regulatory domain activates the methylesterase activity.

Its subcellular location is the cytoplasm. The enzyme catalyses [protein]-L-glutamate 5-O-methyl ester + H2O = L-glutamyl-[protein] + methanol + H(+). The catalysed reaction is L-glutaminyl-[protein] + H2O = L-glutamyl-[protein] + NH4(+). Involved in chemotaxis. Part of a chemotaxis signal transduction system that modulates chemotaxis in response to various stimuli. Catalyzes the demethylation of specific methylglutamate residues introduced into the chemoreceptors (methyl-accepting chemotaxis proteins or MCP) by CheR. Also mediates the irreversible deamidation of specific glutamine residues to glutamic acid. The protein is Protein-glutamate methylesterase/protein-glutamine glutaminase 1 of Xanthomonas oryzae pv. oryzae (strain MAFF 311018).